A 338-amino-acid chain; its full sequence is Holliday junction branch migration complex subunit RuvB (338 aa).

The tract at residues 1–184 is large ATPase domain (RuvB-L); it reads MTEEERLLSA…FGIISHMEYY (184 aa). ATP-binding positions include Leu23, Arg24, Gly65, Lys68, Thr69, Thr70, 131 to 133, Arg174, Tyr184, and Arg221; that span reads EDF. Thr69 contacts Mg(2+). Residues 185–255 form a small ATPAse domain (RuvB-S) region; that stretch reads QEQDLKEIVL…IADKALTLLQ (71 aa). Residues 258-338 are head domain (RuvB-H); it reads HQGLDYVDQK…GYDYLEGRKN (81 aa). DNA-binding residues include Arg313 and Arg318.

The protein belongs to the RuvB family. As to quaternary structure, homohexamer. Forms an RuvA(8)-RuvB(12)-Holliday junction (HJ) complex. HJ DNA is sandwiched between 2 RuvA tetramers; dsDNA enters through RuvA and exits via RuvB. An RuvB hexamer assembles on each DNA strand where it exits the tetramer. Each RuvB hexamer is contacted by two RuvA subunits (via domain III) on 2 adjacent RuvB subunits; this complex drives branch migration. In the full resolvosome a probable DNA-RuvA(4)-RuvB(12)-RuvC(2) complex forms which resolves the HJ.

The protein resides in the cytoplasm. The catalysed reaction is ATP + H2O = ADP + phosphate + H(+). Its function is as follows. The RuvA-RuvB-RuvC complex processes Holliday junction (HJ) DNA during genetic recombination and DNA repair, while the RuvA-RuvB complex plays an important role in the rescue of blocked DNA replication forks via replication fork reversal (RFR). RuvA specifically binds to HJ cruciform DNA, conferring on it an open structure. The RuvB hexamer acts as an ATP-dependent pump, pulling dsDNA into and through the RuvAB complex. RuvB forms 2 homohexamers on either side of HJ DNA bound by 1 or 2 RuvA tetramers; 4 subunits per hexamer contact DNA at a time. Coordinated motions by a converter formed by DNA-disengaged RuvB subunits stimulates ATP hydrolysis and nucleotide exchange. Immobilization of the converter enables RuvB to convert the ATP-contained energy into a lever motion, pulling 2 nucleotides of DNA out of the RuvA tetramer per ATP hydrolyzed, thus driving DNA branch migration. The RuvB motors rotate together with the DNA substrate, which together with the progressing nucleotide cycle form the mechanistic basis for DNA recombination by continuous HJ branch migration. Branch migration allows RuvC to scan DNA until it finds its consensus sequence, where it cleaves and resolves cruciform DNA. The sequence is that of Holliday junction branch migration complex subunit RuvB from Enterococcus faecalis (strain ATCC 700802 / V583).